A 395-amino-acid chain; its full sequence is Proteinase-activated receptor 4 (395 aa).

An N-terminal signal peptide occupies residues 1-16; it reads MCWPLLYPLMLGFSIS. A propeptide spans 17 to 58 (removed for receptor activation); that stretch reads PAECQTPSIYDDVESTREGQEASLRPTVELNESKSPDKPNPR. Residues 46–66 form a disordered region; that stretch reads LNESKSPDKPNPRGFPGKPCA. Positions 47–56 are enriched in basic and acidic residues; it reads NESKSPDKPN. Topologically, residues 59 to 93 are extracellular; sequence GFPGKPCANNSDTLELPASSEALLLGWVPTRLVPA. Residue Asn67 is glycosylated (N-linked (GlcNAc...) asparagine). The helical transmembrane segment at 94 to 114 threads the bilayer; the sequence is IYGLVVVVGLPANGLALWVLA. Over 115 to 119 the chain is Cytoplasmic; the sequence is TRVPR. The helical transmembrane segment at 120-140 threads the bilayer; the sequence is LPSTILLMNLAVADLLLALVL. Topologically, residues 141-161 are extracellular; it reads PPRLVYHLRGQRWPFGEAACR. The cysteines at positions 160 and 239 are disulfide-linked. The chain crosses the membrane as a helical span at residues 162–182; the sequence is VATAALYGHMYGSVLLLAAVS. The Cytoplasmic segment spans residues 183 to 203; sequence LDRYLALVHSLRARALRGQRL. The chain crosses the membrane as a helical span at residues 204-224; it reads TTILCLVAWLSAATLVLPLTF. Topologically, residues 225–254 are extracellular; sequence HRQTFLLAGSDRMLCHDALPLAEQTSHWRP. Residues 255-275 form a helical membrane-spanning segment; it reads AFICLAVLGCFVPLLAMVLCY. The Cytoplasmic portion of the chain corresponds to 276–295; that stretch reads GATLRALAANGQRYSHAVRL. A helical membrane pass occupies residues 296–316; it reads TALVLFSAVAAFTPSNVLLVL. Residues 317 to 330 are Extracellular-facing; it reads HYSNPSPEAWGNLY. A helical membrane pass occupies residues 331–354; sequence GAYVPSLALSTLNSCVDPFIYYYV. At 355–395 the chain is on the cytoplasmic side; the sequence is SHEFREKVRAMLCRQLKASSSSQASREAGSRGTAICSSTLL.

It belongs to the G-protein coupled receptor 1 family. Post-translationally, a proteolytic cleavage generates a new N-terminus that functions as a tethered ligand.

It is found in the cell membrane. Its function is as follows. Receptor for activated thrombin or trypsin coupled to G proteins that stimulate phosphoinositide hydrolysis. May play a role in platelets activation. The chain is Proteinase-activated receptor 4 (F2rl3) from Rattus norvegicus (Rat).